Consider the following 373-residue polypeptide: Protein translocase subunit SecF (373 aa).

The next 6 helical transmembrane spans lie at 26–46, 142–162, 166–186, 193–213, 251–271, and 280–300; these read IWYGISILITITAIVGLAVRG, WQGLGIFMVLVVIYLAIAFEW, LAAFVALIHDITITVGIYALV, GTVIGLLTILGYSLYDTVVVF, VVALLPVAGLLFIGGGVLGAG, and LFVGLAAGAYSSIFIATPLVA. Over residues 322 to 332 the composition is skewed to low complexity; that stretch reads QGAAKGESAES. Residues 322–373 form a disordered region; sequence QGAAKGESAESAADEGAYDADEPDDAAPAVVGPRNQPASRGRGRGRPSGKRR. Over residues 333-346 the composition is skewed to acidic residues; it reads AADEGAYDADEPDD. Residues 362-373 show a composition bias toward basic residues; the sequence is GRGRGRPSGKRR.

This sequence belongs to the SecD/SecF family. SecF subfamily. Forms a complex with SecD. Part of the essential Sec protein translocation apparatus which comprises SecA, SecYEG and auxiliary proteins SecDF. Other proteins may also be involved.

It localises to the cell membrane. Its function is as follows. Part of the Sec protein translocase complex. Interacts with the SecYEG preprotein conducting channel. SecDF uses the proton motive force (PMF) to complete protein translocation after the ATP-dependent function of SecA. This chain is Protein translocase subunit SecF, found in Streptomyces coelicolor (strain ATCC BAA-471 / A3(2) / M145).